Reading from the N-terminus, the 319-residue chain is ATP-dependent 6-phosphofructokinase (319 aa).

Gly11 is a binding site for ATP. An ADP-binding site is contributed by 21-25 (RAVVR). Residues 72-73 (RC) and 102-105 (GDGS) contribute to the ATP site. Position 103 (Asp103) interacts with Mg(2+). 125–127 (TID) contributes to the substrate binding site. Asp127 serves as the catalytic Proton acceptor. Arg154 provides a ligand contact to ADP. Substrate contacts are provided by residues Arg162 and 169 to 171 (MGR). Residues 185 to 187 (GAE), Arg211, and 213 to 215 (KKH) contribute to the ADP site. Substrate-binding positions include Glu222, Arg243, and 249–252 (HVQR).

Belongs to the phosphofructokinase type A (PFKA) family. ATP-dependent PFK group I subfamily. Prokaryotic clade 'B1' sub-subfamily. As to quaternary structure, homotetramer. Mg(2+) serves as cofactor.

The protein localises to the cytoplasm. The catalysed reaction is beta-D-fructose 6-phosphate + ATP = beta-D-fructose 1,6-bisphosphate + ADP + H(+). It functions in the pathway carbohydrate degradation; glycolysis; D-glyceraldehyde 3-phosphate and glycerone phosphate from D-glucose: step 3/4. Its activity is regulated as follows. Allosterically activated by ADP and other diphosphonucleosides, and allosterically inhibited by phosphoenolpyruvate. Its function is as follows. Catalyzes the phosphorylation of D-fructose 6-phosphate to fructose 1,6-bisphosphate by ATP, the first committing step of glycolysis. The chain is ATP-dependent 6-phosphofructokinase from Bacillus cereus (strain B4264).